We begin with the raw amino-acid sequence, 115 residues long: Large ribosomal subunit protein P1 (115 aa).

Residues 56–73 show a composition bias toward low complexity; sequence QAAAAPVPASGGAAAPAE. Residues 56 to 115 form a disordered region; that stretch reads QAAAAPVPASGGAAAPAEGDADEADEADEEAEEEAADDGGDDDDDEDDEASGEGLGELFG. Residues 74 to 106 are compositionally biased toward acidic residues; it reads GDADEADEADEEAEEEAADDGGDDDDDEDDEAS.

This sequence belongs to the eukaryotic ribosomal protein P1/P2 family. As to quaternary structure, part of the 50S ribosomal subunit. Homodimer, it forms part of the ribosomal stalk which helps the ribosome interact with GTP-bound translation factors. Forms a heptameric uL10/P0(P1)2(P1)2(P1)2 complex, where uL10/P0 forms an elongated spine to which the P1 dimers bind in a sequential fashion.

Functionally, forms part of the ribosomal stalk, playing a central role in the interaction of the ribosome with GTP-bound translation factors. This chain is Large ribosomal subunit protein P1, found in Haloarcula marismortui (strain ATCC 43049 / DSM 3752 / JCM 8966 / VKM B-1809) (Halobacterium marismortui).